The following is a 953-amino-acid chain: Isoleucine--tRNA ligase (953 aa).

Residues 57-67 carry the 'HIGH' region motif; the sequence is PYANGDIHIGH. L-isoleucyl-5'-AMP is bound at residue Glu-582. The 'KMSKS' region signature appears at 623 to 627; it reads KMSKS. Lys-626 is an ATP binding site. Cys-916, Cys-919, Cys-936, and Cys-939 together coordinate Zn(2+).

Belongs to the class-I aminoacyl-tRNA synthetase family. IleS type 1 subfamily. As to quaternary structure, monomer. The cofactor is Zn(2+).

The protein localises to the cytoplasm. It carries out the reaction tRNA(Ile) + L-isoleucine + ATP = L-isoleucyl-tRNA(Ile) + AMP + diphosphate. Its function is as follows. Catalyzes the attachment of isoleucine to tRNA(Ile). As IleRS can inadvertently accommodate and process structurally similar amino acids such as valine, to avoid such errors it has two additional distinct tRNA(Ile)-dependent editing activities. One activity is designated as 'pretransfer' editing and involves the hydrolysis of activated Val-AMP. The other activity is designated 'posttransfer' editing and involves deacylation of mischarged Val-tRNA(Ile). The polypeptide is Isoleucine--tRNA ligase (Bordetella avium (strain 197N)).